Here is a 389-residue protein sequence, read N- to C-terminus: Stilbene synthase 3 (389 aa).

Residue 55–58 (KFQR) coordinates substrate. Cysteine 164 is an active-site residue. Substrate is bound by residues leucine 267 and 305–307 (GGR).

The protein belongs to the thiolase-like superfamily. Chalcone/stilbene synthases family. In terms of assembly, homodimer.

Its subcellular location is the cytoplasm. It carries out the reaction 4-coumaroyl-CoA + 3 malonyl-CoA + 3 H(+) = trans-resveratrol + 4 CO2 + 4 CoA. It functions in the pathway phytoalexin biosynthesis; 3,4',5-trihydroxystilbene biosynthesis; 3,4',5-trihydroxystilbene from trans-4-coumarate: step 2/2. The chain is Stilbene synthase 3 from Arachis hypogaea (Peanut).